Here is a 394-residue protein sequence, read N- to C-terminus: E3 ubiquitin-protein ligase RNF149 (394 aa).

Residues 1–31 (MAARRRPAAGVGARDALAVLALALCTPGVGG) form the signal peptide. Asparagine 51 and asparagine 141 each carry an N-linked (GlcNAc...) asparagine glycan. One can recognise a PA domain in the interval 66 to 171 (SSLREERQGL…PKGREIFDLV (106 aa)). A helical membrane pass occupies residues 197–217 (VVFVAIAFITMMIISLAWLIF). The segment at 265-306 (CAVCIENFKVKDVIRILPCKHIFHRICIDPWLLDHRTCPMCK) adopts an RING-type; atypical zinc-finger fold. The interval 321-394 (DTQELPTPEA…SEPQHGGSIC (74 aa)) is disordered. Threonine 327 carries the phosphothreonine modification. Asparagine 339 carries an N-linked (GlcNAc...) asparagine glycan. Serine 341 and serine 344 each carry phosphoserine. The span at 352–362 (SNLPSSSSSES) shows a compositional bias: low complexity.

It is found in the membrane. It catalyses the reaction S-ubiquitinyl-[E2 ubiquitin-conjugating enzyme]-L-cysteine + [acceptor protein]-L-lysine = [E2 ubiquitin-conjugating enzyme]-L-cysteine + N(6)-ubiquitinyl-[acceptor protein]-L-lysine.. It participates in protein modification; protein ubiquitination. E3 ubiquitin-protein ligase. Ubiquitinates BRAF, inducing its proteasomal degradation. This is E3 ubiquitin-protein ligase RNF149 (Rnf149) from Mus musculus (Mouse).